A 334-amino-acid chain; its full sequence is Glycerol-3-phosphate dehydrogenase [NAD(P)+] (334 aa).

NADPH is bound by residues Trp13, Arg33, and Lys106. Sn-glycerol 3-phosphate-binding residues include Lys106, Gly137, and Ser139. Ala141 lines the NADPH pocket. Sn-glycerol 3-phosphate is bound by residues Lys192, Asp245, Ser255, Arg256, and Asn257. Lys192 acts as the Proton acceptor in catalysis. Arg256 serves as a coordination point for NADPH. Positions 280 and 282 each coordinate NADPH.

It belongs to the NAD-dependent glycerol-3-phosphate dehydrogenase family.

The protein resides in the cytoplasm. It catalyses the reaction sn-glycerol 3-phosphate + NAD(+) = dihydroxyacetone phosphate + NADH + H(+). It carries out the reaction sn-glycerol 3-phosphate + NADP(+) = dihydroxyacetone phosphate + NADPH + H(+). It functions in the pathway membrane lipid metabolism; glycerophospholipid metabolism. In terms of biological role, catalyzes the reduction of the glycolytic intermediate dihydroxyacetone phosphate (DHAP) to sn-glycerol 3-phosphate (G3P), the key precursor for phospholipid synthesis. The protein is Glycerol-3-phosphate dehydrogenase [NAD(P)+] of Chlamydia caviae (strain ATCC VR-813 / DSM 19441 / 03DC25 / GPIC) (Chlamydophila caviae).